Reading from the N-terminus, the 165-residue chain is PTS system glucose-specific EIIA component (165 aa).

The PTS EIIA type-1 domain occupies 33-137; that stretch reads DPVFAGRMMG…STITPIVITN (105 aa). Residues His-70 and His-85 each contribute to the Zn(2+) site. The Tele-phosphohistidine intermediate; for EIIA activity role is filled by His-85. The residue at position 85 (His-85) is a Phosphohistidine; by HPr.

As to quaternary structure, heterodimer with glycerol kinase (glpk). The cofactor is Zn(2+).

Its subcellular location is the cytoplasm. Its function is as follows. The phosphoenolpyruvate-dependent sugar phosphotransferase system (sugar PTS), a major carbohydrate active transport system, catalyzes the phosphorylation of incoming sugar substrates concomitantly with their translocation across the cell membrane. The enzyme II complex composed of PtsG and Crr is involved in glucose transport. This Bacillus cereus (strain ATCC 14579 / DSM 31 / CCUG 7414 / JCM 2152 / NBRC 15305 / NCIMB 9373 / NCTC 2599 / NRRL B-3711) protein is PTS system glucose-specific EIIA component (crr).